A 574-amino-acid polypeptide reads, in one-letter code: R-linalool synthase, chloroplastic (574 aa).

The N-terminal 40 residues, 1–40, are a transit peptide targeting the chloroplast; it reads MSCARITVTLPYRSAKTSIQRGITHCPALLRPRFSACTPL. The segment covering 52–61 has biased composition (polar residues); the sequence is INGDNSPLKN. The disordered stretch occupies residues 52–71; that stretch reads INGDNSPLKNTHQHVEERSS. Residues Arg287, Asp324, Asp328, Arg467, and Asp470 each contribute to the (2E)-geranyl diphosphate site. Residues Asp324 and Asp328 each contribute to the Mg(2+) site. Residues 324-328 carry the DDXXD motif motif; that stretch reads DDIFD. Residues Asp470, Thr474, and Glu478 each contribute to the Mg(2+) site.

It belongs to the terpene synthase family. Tpsb subfamily. It depends on Mg(2+) as a cofactor. The cofactor is Mn(2+).

Its subcellular location is the plastid. It is found in the chloroplast. The enzyme catalyses (2E)-geranyl diphosphate + H2O = (R)-linalool + diphosphate. The protein operates within secondary metabolite biosynthesis; terpenoid biosynthesis. Functionally, monoterpene synthase that catalyzes the formation of (3R)-linalool from geranyl diphosphate. This Ocimum basilicum (Sweet basil) protein is R-linalool synthase, chloroplastic (LIS).